We begin with the raw amino-acid sequence, 161 residues long: Nascent polypeptide-associated complex subunit beta (161 aa).

Disordered stretches follow at residues 14 to 41 (LSANNKVGGTRRKLAKKSGTASANKDDS) and 125 to 161 (QNAQAAAPATEGHEAGEKKDNDIPELIEGQSFDADVE). The NAC-A/B domain occupies 37–102 (NKDDSKLQAQ…PQEKSLQDLF (66 aa)). Residues 125 to 134 (QNAQAAAPAT) show a composition bias toward low complexity. A compositionally biased stretch (basic and acidic residues) spans 135-146 (EGHEAGEKKDND).

It belongs to the NAC-beta family. In terms of assembly, part of the nascent polypeptide-associated complex (NAC), consisting of EGD2 and EGD1. NAC associates with ribosomes via EGD1.

The protein localises to the cytoplasm. The protein resides in the nucleus. Component of the nascent polypeptide-associated complex (NAC), a dynamic component of the ribosomal exit tunnel, protecting the emerging polypeptides from interaction with other cytoplasmic proteins to ensure appropriate nascent protein targeting. The NAC complex also promotes mitochondrial protein import by enhancing productive ribosome interactions with the outer mitochondrial membrane and blocks the inappropriate interaction of ribosomes translating non-secretory nascent polypeptides with translocation sites in the membrane of the endoplasmic reticulum. EGD1 may act as a transcription factor that exert a negative effect on the expression of several genes that are transcribed by RNA polymerase II. This chain is Nascent polypeptide-associated complex subunit beta (EGD1), found in Eremothecium gossypii (strain ATCC 10895 / CBS 109.51 / FGSC 9923 / NRRL Y-1056) (Yeast).